The sequence spans 741 residues: Catalase-peroxidase 2 (741 aa).

The first 28 residues, 1–28 (MQKKRIGKSVVAALAIIAMSAGTVAAWA), serve as a signal peptide directing secretion. The tryptophyl-tyrosyl-methioninium (Trp-Tyr) (with M-254) cross-link spans 107–228 (WHGAGTYRTY…LAATQMGLIY (122 aa)). H108 functions as the Proton acceptor in the catalytic mechanism. A cross-link (tryptophyl-tyrosyl-methioninium (Tyr-Met) (with W-107)) is located at residues 228–254 (YVNPEGPNGNPDPVAAAKDIREAFGRM). A heme b-binding site is contributed by H269.

This sequence belongs to the peroxidase family. Peroxidase/catalase subfamily. As to quaternary structure, homodimer or homotetramer. Heme b serves as cofactor. Post-translationally, formation of the three residue Trp-Tyr-Met cross-link is important for the catalase, but not the peroxidase activity of the enzyme.

The enzyme catalyses H2O2 + AH2 = A + 2 H2O. It catalyses the reaction 2 H2O2 = O2 + 2 H2O. Its function is as follows. Bifunctional enzyme with both catalase and broad-spectrum peroxidase activity. The chain is Catalase-peroxidase 2 from Burkholderia ambifaria (strain MC40-6).